The chain runs to 363 residues: Dihydroorotate dehydrogenase (quinone) (363 aa).

Residues 67–71 (AGLDK) and T91 each bind FMN. K71 is a substrate binding site. 116–120 (NRMGF) is a substrate binding site. FMN-binding residues include N145 and N178. N178 is a substrate binding site. S181 serves as the catalytic Nucleophile. N183 is a substrate binding site. Residues K219 and T247 each coordinate FMN. 248 to 249 (NT) contacts substrate. Residues G268, G297, and 318 to 319 (YT) contribute to the FMN site.

It belongs to the dihydroorotate dehydrogenase family. Type 2 subfamily. Monomer. Requires FMN as cofactor.

Its subcellular location is the cell membrane. It catalyses the reaction (S)-dihydroorotate + a quinone = orotate + a quinol. The protein operates within pyrimidine metabolism; UMP biosynthesis via de novo pathway; orotate from (S)-dihydroorotate (quinone route): step 1/1. Functionally, catalyzes the conversion of dihydroorotate to orotate with quinone as electron acceptor. This is Dihydroorotate dehydrogenase (quinone) from Myxococcus xanthus (strain DK1622).